The following is a 144-amino-acid chain: D-aminoacyl-tRNA deacylase (144 aa).

Residues 136–137 carry the Gly-cisPro motif, important for rejection of L-amino acids motif; that stretch reads GP.

It belongs to the DTD family. In terms of assembly, homodimer.

Its subcellular location is the cytoplasm. It catalyses the reaction glycyl-tRNA(Ala) + H2O = tRNA(Ala) + glycine + H(+). The enzyme catalyses a D-aminoacyl-tRNA + H2O = a tRNA + a D-alpha-amino acid + H(+). In terms of biological role, an aminoacyl-tRNA editing enzyme that deacylates mischarged D-aminoacyl-tRNAs. Also deacylates mischarged glycyl-tRNA(Ala), protecting cells against glycine mischarging by AlaRS. Acts via tRNA-based rather than protein-based catalysis; rejects L-amino acids rather than detecting D-amino acids in the active site. By recycling D-aminoacyl-tRNA to D-amino acids and free tRNA molecules, this enzyme counteracts the toxicity associated with the formation of D-aminoacyl-tRNA entities in vivo and helps enforce protein L-homochirality. This Vibrio atlanticus (strain LGP32) (Vibrio splendidus (strain Mel32)) protein is D-aminoacyl-tRNA deacylase.